The sequence spans 251 residues: Octanoyltransferase (251 aa).

The region spanning 56 to 237 (ADTGDEIWVV…RLIANLDGES (182 aa)) is the BPL/LPL catalytic domain. Residues 96–103 (RGGQITYH), 168–170 (ALG), and 181–183 (GLS) contribute to the substrate site. Cys199 functions as the Acyl-thioester intermediate in the catalytic mechanism.

The protein belongs to the LipB family.

It is found in the cytoplasm. It carries out the reaction octanoyl-[ACP] + L-lysyl-[protein] = N(6)-octanoyl-L-lysyl-[protein] + holo-[ACP] + H(+). The protein operates within protein modification; protein lipoylation via endogenous pathway; protein N(6)-(lipoyl)lysine from octanoyl-[acyl-carrier-protein]: step 1/2. In terms of biological role, catalyzes the transfer of endogenously produced octanoic acid from octanoyl-acyl-carrier-protein onto the lipoyl domains of lipoate-dependent enzymes. Lipoyl-ACP can also act as a substrate although octanoyl-ACP is likely to be the physiological substrate. The sequence is that of Octanoyltransferase from Burkholderia ambifaria (strain ATCC BAA-244 / DSM 16087 / CCUG 44356 / LMG 19182 / AMMD) (Burkholderia cepacia (strain AMMD)).